The sequence spans 152 residues: NADH-quinone oxidoreductase subunit A 2 (152 aa).

The next 3 helical transmembrane spans lie at 8–28, 63–83, and 90–110; these read FGKV…GYVS, FYVV…LFPW, and LGGF…LGLV.

The protein belongs to the complex I subunit 3 family. As to quaternary structure, NDH-1 is composed of 14 different subunits. Subunits NuoA, H, J, K, L, M, N constitute the membrane sector of the complex.

It is found in the cell inner membrane. It catalyses the reaction a quinone + NADH + 5 H(+)(in) = a quinol + NAD(+) + 4 H(+)(out). Its function is as follows. NDH-1 shuttles electrons from NADH, via FMN and iron-sulfur (Fe-S) centers, to quinones in the respiratory chain. The immediate electron acceptor for the enzyme in this species is believed to be a menaquinone. Couples the redox reaction to proton translocation (for every two electrons transferred, four hydrogen ions are translocated across the cytoplasmic membrane), and thus conserves the redox energy in a proton gradient. The polypeptide is NADH-quinone oxidoreductase subunit A 2 (Chloroherpeton thalassium (strain ATCC 35110 / GB-78)).